A 403-amino-acid polypeptide reads, in one-letter code: S-adenosylmethionine synthase (403 aa).

H16 is an ATP binding site. A Mg(2+)-binding site is contributed by D18. Residue E44 coordinates K(+). L-methionine-binding residues include E57 and Q100. Residues 100 to 110 form a flexible loop region; the sequence is QSSDIAQGVDR. ATP contacts are provided by residues 165–167, D242, 248–249, A265, and K269; these read DAK and RK. Position 242 (D242) interacts with L-methionine. K273 provides a ligand contact to L-methionine.

Belongs to the AdoMet synthase family. As to quaternary structure, homotetramer; dimer of dimers. Requires Mg(2+) as cofactor. The cofactor is K(+).

The protein localises to the cytoplasm. The catalysed reaction is L-methionine + ATP + H2O = S-adenosyl-L-methionine + phosphate + diphosphate. It functions in the pathway amino-acid biosynthesis; S-adenosyl-L-methionine biosynthesis; S-adenosyl-L-methionine from L-methionine: step 1/1. Functionally, catalyzes the formation of S-adenosylmethionine (AdoMet) from methionine and ATP. The overall synthetic reaction is composed of two sequential steps, AdoMet formation and the subsequent tripolyphosphate hydrolysis which occurs prior to release of AdoMet from the enzyme. The polypeptide is S-adenosylmethionine synthase (Nitrosococcus oceani (strain ATCC 19707 / BCRC 17464 / JCM 30415 / NCIMB 11848 / C-107)).